Reading from the N-terminus, the 54-residue chain is Potassium channel toxin alpha-KTx 14.2 (54 aa).

Residues 1-23 form the signal peptide; it reads MKIFFAILLILAVCSMAIWTVNG. 3 disulfides stabilise this stretch: Cys30–Cys46, Cys36–Cys51, and Cys40–Cys53.

It belongs to the short scorpion toxin superfamily. Potassium channel inhibitor family. Alpha-KTx 14 subfamily. As to expression, expressed by the venom gland.

Its subcellular location is the secreted. Functionally, inhibits potassium channels. May be active towards small conductance calcium-activated potassium channels (KCNN, SK), and less active towards voltage-gated potassium channels (Kv/KCN). This Olivierus martensii (Manchurian scorpion) protein is Potassium channel toxin alpha-KTx 14.2.